A 503-amino-acid chain; its full sequence is ATP synthase subunit alpha (503 aa).

170 to 177 (GDKQTGKT) contributes to the ATP binding site.

This sequence belongs to the ATPase alpha/beta chains family. In terms of assembly, F-type ATPases have 2 components, CF(1) - the catalytic core - and CF(0) - the membrane proton channel. CF(1) has five subunits: alpha(3), beta(3), gamma(1), delta(1), epsilon(1). CF(0) has three main subunits: a(1), b(2) and c(9-12). The alpha and beta chains form an alternating ring which encloses part of the gamma chain. CF(1) is attached to CF(0) by a central stalk formed by the gamma and epsilon chains, while a peripheral stalk is formed by the delta and b chains.

The protein resides in the cell inner membrane. The enzyme catalyses ATP + H2O + 4 H(+)(in) = ADP + phosphate + 5 H(+)(out). Its function is as follows. Produces ATP from ADP in the presence of a proton gradient across the membrane. The alpha chain is a regulatory subunit. The polypeptide is ATP synthase subunit alpha (Helicobacter pylori (strain J99 / ATCC 700824) (Campylobacter pylori J99)).